We begin with the raw amino-acid sequence, 566 residues long: Myo-inositol transporter 1A (566 aa).

Residues 1–64 are Cytoplasmic-facing; that stretch reads MSDEKNYGIS…ERTEKLTKFV (64 aa). The chain crosses the membrane as a helical span at residues 65 to 85; that stretch reads VGLALFASVSGFCFGFDTGVI. Topologically, residues 86–106 are extracellular; that stretch reads SAALVSIKDDFGHILDDTEKE. A helical transmembrane segment spans residues 107-127; that stretch reads WISAATSCGALVGALSSGALA. The Cytoplasmic portion of the chain corresponds to 128 to 140; it reads DRVGRKWTLAVGD. Residues 141 to 161 traverse the membrane as a helical segment; sequence VWFTLGAIIICSSFSVVQMIV. Residues 162 to 163 lie on the Extracellular side of the membrane; that stretch reads GR. Residues 164 to 184 form a helical membrane-spanning segment; it reads AVLGLGVGTAAAIAPLYIAEV. Residues 185–192 are Cytoplasmic-facing; it reads APTRFRGA. A helical membrane pass occupies residues 193–213; it reads LVTVQSIAITGGQFFSYCIGI. Residues 214–222 lie on the Extracellular side of the membrane; that stretch reads PLTGHNGWR. A helical membrane pass occupies residues 223 to 243; the sequence is IQFAIGIVPAVVQAAVVHFLP. The Cytoplasmic segment spans residues 244-313; sequence ESPRYDLLRG…VLTEGKYRKP (70 aa). The helical transmembrane segment at 314–334 threads the bilayer; it reads AITALGIGIFQQLCGFNSLMY. Over 335–349 the chain is Extracellular; that stretch reads YAATIFSYAGFDNPT. Residues 350 to 370 traverse the membrane as a helical segment; it reads SVGLIVSGTNWFFTFVAMMIL. Residues 371–377 lie on the Cytoplasmic side of the membrane; sequence DRVGKRR. The chain crosses the membrane as a helical span at residues 378 to 398; sequence ILLSTYPGMIAGLALASVAFW. Residues 399 to 421 are Extracellular-facing; sequence KMTGSTGHRLVEGTEYPQQWSNM. A helical transmembrane segment spans residues 422 to 442; it reads MLGMMVVFIAFYATGSGNITW. The Cytoplasmic portion of the chain corresponds to 443–458; it reads TVGEMFPLEMRGIGAS. The helical transmembrane segment at 459 to 479 threads the bilayer; the sequence is ILAGGVWAANIVISATFLTLM. Residues 480–485 lie on the Extracellular side of the membrane; it reads NAIGPT. Residues 486–506 form a helical membrane-spanning segment; the sequence is PTFALYAGICLAGLIFIYFCY. Residues 507–566 lie on the Cytoplasmic side of the membrane; sequence PEPSGLSLEEIQIIYNYGFGVQKSREIRAEHKLKAQEMRDRANSHIGGSATASDDQLNKV. Residues 546-566 form a disordered region; sequence DRANSHIGGSATASDDQLNKV. Residues 556-566 show a composition bias toward polar residues; that stretch reads ATASDDQLNKV.

Belongs to the major facilitator superfamily. Sugar transporter (TC 2.A.1.1) family.

It is found in the cell membrane. The enzyme catalyses myo-inositol(out) + H(+)(out) = myo-inositol(in) + H(+)(in). In terms of biological role, major transporter for myo-inositol. Plays a role in the traversal of the host blood-brain barrier. This Cryptococcus neoformans var. grubii serotype A (strain H99 / ATCC 208821 / CBS 10515 / FGSC 9487) (Filobasidiella neoformans var. grubii) protein is Myo-inositol transporter 1A.